The sequence spans 138 residues: Large ribosomal subunit protein uL16 (138 aa).

Residues 1-29 (MSLLQPRKVKWRKPQKGRTKGKATRRNQV) are disordered. Residues 7-25 (RKVKWRKPQKGRTKGKATR) are compositionally biased toward basic residues.

It belongs to the universal ribosomal protein uL16 family. In terms of assembly, part of the 50S ribosomal subunit.

Its function is as follows. Binds 23S rRNA and is also seen to make contacts with the A and possibly P site tRNAs. This Sulfurihydrogenibium sp. (strain YO3AOP1) protein is Large ribosomal subunit protein uL16.